The sequence spans 139 residues: Endoribonuclease YbeY (139 aa).

Positions 107, 111, and 117 each coordinate Zn(2+).

It belongs to the endoribonuclease YbeY family. It depends on Zn(2+) as a cofactor.

It is found in the cytoplasm. In terms of biological role, single strand-specific metallo-endoribonuclease involved in late-stage 70S ribosome quality control and in maturation of the 3' terminus of the 16S rRNA. The chain is Endoribonuclease YbeY from Azobacteroides pseudotrichonymphae genomovar. CFP2.